The sequence spans 241 residues: Acetoacetyl-CoA reductase (241 aa).

Residues 12–14 (RGI), Arg39, and 82–86 (NAGIT) each bind NADP(+). Substrate is bound by residues Asp88 and 141–144 (QMGQ). Tyr147 functions as the Proton acceptor in the catalytic mechanism. 177–180 (PGYI) contacts NADP(+). Substrate is bound at residue 178–179 (GY).

It belongs to the short-chain dehydrogenases/reductases (SDR) family.

The protein resides in the cytoplasm. The catalysed reaction is a (3R)-3-hydroxyacyl-CoA + NADP(+) = a 3-oxoacyl-CoA + NADPH + H(+). Its pathway is biopolymer metabolism; poly-(R)-3-hydroxybutanoate biosynthesis. This is Acetoacetyl-CoA reductase from Rhizobium meliloti (strain 1021) (Ensifer meliloti).